We begin with the raw amino-acid sequence, 214 residues long: Orotate phosphoribosyltransferase (214 aa).

Lysine 26 provides a ligand contact to 5-phospho-alpha-D-ribose 1-diphosphate. Orotate is bound at residue 34–35 (FF). 5-phospho-alpha-D-ribose 1-diphosphate is bound by residues 72 to 73 (YK), arginine 99, lysine 100, lysine 103, histidine 105, and 124 to 132 (DDVITAGTA). 2 residues coordinate orotate: threonine 128 and arginine 157.

It belongs to the purine/pyrimidine phosphoribosyltransferase family. PyrE subfamily. As to quaternary structure, homodimer. Requires Mg(2+) as cofactor.

The enzyme catalyses orotidine 5'-phosphate + diphosphate = orotate + 5-phospho-alpha-D-ribose 1-diphosphate. Its pathway is pyrimidine metabolism; UMP biosynthesis via de novo pathway; UMP from orotate: step 1/2. Its function is as follows. Catalyzes the transfer of a ribosyl phosphate group from 5-phosphoribose 1-diphosphate to orotate, leading to the formation of orotidine monophosphate (OMP). This chain is Orotate phosphoribosyltransferase, found in Pseudomonas fluorescens (strain SBW25).